The sequence spans 89 residues: Putative membrane protein insertion efficiency factor (89 aa).

Residues valine 68–leucine 89 are disordered. Positions asparagine 77–leucine 89 are enriched in basic and acidic residues.

The protein belongs to the UPF0161 family.

The protein localises to the cell inner membrane. Its function is as follows. Could be involved in insertion of integral membrane proteins into the membrane. This is Putative membrane protein insertion efficiency factor from Burkholderia mallei (strain SAVP1).